Here is a 183-residue protein sequence, read N- to C-terminus: Dual specificity protein phosphatase 22-B (183 aa).

The 141-residue stretch at 4 to 144 (GINKVLPDLY…LQEFQTGELQ (141 aa)) folds into the Tyrosine-protein phosphatase domain. Cysteine 88 (phosphocysteine intermediate) is an active-site residue.

This sequence belongs to the protein-tyrosine phosphatase family. Non-receptor class dual specificity subfamily.

It localises to the cytoplasm. Its subcellular location is the nucleus. It carries out the reaction O-phospho-L-tyrosyl-[protein] + H2O = L-tyrosyl-[protein] + phosphate. It catalyses the reaction O-phospho-L-seryl-[protein] + H2O = L-seryl-[protein] + phosphate. The enzyme catalyses O-phospho-L-threonyl-[protein] + H2O = L-threonyl-[protein] + phosphate. Functionally, activates the Jnk signaling pathway. Dephosphorylates and deactivates p38 and stress-activated protein kinase/c-Jun N-terminal kinase (SAPK/JNK). This Danio rerio (Zebrafish) protein is Dual specificity protein phosphatase 22-B (dusp22b).